The following is a 1397-amino-acid chain: DNA-directed RNA polymerase subunit beta' (1397 aa).

Cysteine 75, cysteine 77, cysteine 90, and cysteine 93 together coordinate Zn(2+). Mg(2+) is bound by residues aspartate 465, aspartate 467, and aspartate 469. Positions 819, 893, 900, and 903 each coordinate Zn(2+).

This sequence belongs to the RNA polymerase beta' chain family. As to quaternary structure, the RNAP catalytic core consists of 2 alpha, 1 beta, 1 beta' and 1 omega subunit. When a sigma factor is associated with the core the holoenzyme is formed, which can initiate transcription. The cofactor is Mg(2+). It depends on Zn(2+) as a cofactor.

The catalysed reaction is RNA(n) + a ribonucleoside 5'-triphosphate = RNA(n+1) + diphosphate. In terms of biological role, DNA-dependent RNA polymerase catalyzes the transcription of DNA into RNA using the four ribonucleoside triphosphates as substrates. This is DNA-directed RNA polymerase subunit beta' from Acinetobacter baylyi (strain ATCC 33305 / BD413 / ADP1).